The following is a 205-amino-acid chain: Thiamine-phosphate synthase (205 aa).

4-amino-2-methyl-5-(diphosphooxymethyl)pyrimidine is bound by residues 35–39 (QYRDK) and Asn-67. Positions 68 and 86 each coordinate Mg(2+). Thr-105 serves as a coordination point for 4-amino-2-methyl-5-(diphosphooxymethyl)pyrimidine. 132 to 134 (SQT) lines the 2-[(2R,5Z)-2-carboxy-4-methylthiazol-5(2H)-ylidene]ethyl phosphate pocket. Position 135 (Lys-135) interacts with 4-amino-2-methyl-5-(diphosphooxymethyl)pyrimidine. Gly-162 contacts 2-[(2R,5Z)-2-carboxy-4-methylthiazol-5(2H)-ylidene]ethyl phosphate.

The protein belongs to the thiamine-phosphate synthase family. Mg(2+) is required as a cofactor.

The enzyme catalyses 2-[(2R,5Z)-2-carboxy-4-methylthiazol-5(2H)-ylidene]ethyl phosphate + 4-amino-2-methyl-5-(diphosphooxymethyl)pyrimidine + 2 H(+) = thiamine phosphate + CO2 + diphosphate. It catalyses the reaction 2-(2-carboxy-4-methylthiazol-5-yl)ethyl phosphate + 4-amino-2-methyl-5-(diphosphooxymethyl)pyrimidine + 2 H(+) = thiamine phosphate + CO2 + diphosphate. The catalysed reaction is 4-methyl-5-(2-phosphooxyethyl)-thiazole + 4-amino-2-methyl-5-(diphosphooxymethyl)pyrimidine + H(+) = thiamine phosphate + diphosphate. It participates in cofactor biosynthesis; thiamine diphosphate biosynthesis; thiamine phosphate from 4-amino-2-methyl-5-diphosphomethylpyrimidine and 4-methyl-5-(2-phosphoethyl)-thiazole: step 1/1. In terms of biological role, condenses 4-methyl-5-(beta-hydroxyethyl)thiazole monophosphate (THZ-P) and 2-methyl-4-amino-5-hydroxymethyl pyrimidine pyrophosphate (HMP-PP) to form thiamine monophosphate (TMP). The polypeptide is Thiamine-phosphate synthase (Pseudomonas syringae pv. tomato (strain ATCC BAA-871 / DC3000)).